The sequence spans 969 residues: Protein translocase subunit SecA (969 aa).

Residues Gln99, 117–121, and Asp631 each bind ATP; that span reads GEGKT.

Belongs to the SecA family. Monomer and homodimer. Part of the essential Sec protein translocation apparatus which comprises SecA, SecYEG and auxiliary proteins SecDF. Other proteins may also be involved.

The protein resides in the cell inner membrane. It localises to the cytoplasm. It carries out the reaction ATP + H2O + cellular proteinSide 1 = ADP + phosphate + cellular proteinSide 2.. In terms of biological role, part of the Sec protein translocase complex. Interacts with the SecYEG preprotein conducting channel. Has a central role in coupling the hydrolysis of ATP to the transfer of proteins into and across the cell membrane, serving as an ATP-driven molecular motor driving the stepwise translocation of polypeptide chains across the membrane. In Chlamydia trachomatis serovar A (strain ATCC VR-571B / DSM 19440 / HAR-13), this protein is Protein translocase subunit SecA.